Consider the following 539-residue polypeptide: Chaperonin GroEL (539 aa).

Residues 30–33 (TLGP), Lys51, 87–91 (DGTTT), Gly415, 479–481 (NAA), and Asp495 contribute to the ATP site.

It belongs to the chaperonin (HSP60) family. As to quaternary structure, forms a cylinder of 14 subunits composed of two heptameric rings stacked back-to-back. Interacts with the co-chaperonin GroES.

The protein resides in the cytoplasm. It catalyses the reaction ATP + H2O + a folded polypeptide = ADP + phosphate + an unfolded polypeptide.. Functionally, together with its co-chaperonin GroES, plays an essential role in assisting protein folding. The GroEL-GroES system forms a nano-cage that allows encapsulation of the non-native substrate proteins and provides a physical environment optimized to promote and accelerate protein folding. In Enterobacter agglomerans (Erwinia herbicola), this protein is Chaperonin GroEL.